A 116-amino-acid chain; its full sequence is Protein Rev (116 aa).

Ser5 bears the Phosphoserine; by host CK2 mark. The segment at 18–26 (YIKILYQSN) is homomultimerization. The short motif at 34–50 (TRKARRNRRRRWRARQR) is the Nuclear localization signal and RNA-binding (RRE) element. Positions 73–84 (LQLPLLEKLHIN) match the Nuclear export signal and binding to XPO1 motif. The interval 90 to 116 (GQGTEKGVGSPQISVESRAVLGSGTKE) is disordered. Ser99 bears the Phosphoserine; by host mark.

This sequence belongs to the HIV-1 REV protein family. As to quaternary structure, homomultimer; when bound to the RRE. Multimeric assembly is essential for activity and may involve XPO1. Binds to human KPNB1, XPO1, TNPO1, RANBP5 and IPO7. Interacts with the viral Integrase. Interacts with human KHDRBS1. Interacts with human NAP1; this interaction decreases Rev multimerization and stimulates its activity. Interacts with human DEAD-box helicases DDX3 and DDX24; these interactions may serve for viral RNA export to the cytoplasm and packaging, respectively. Interacts with human PSIP1; this interaction may inhibit HIV-1 DNA integration by promoting dissociation of the Integrase-LEDGF/p75 complex. Asymmetrically arginine dimethylated at one site by host PRMT6. Methylation impairs the RNA-binding activity and export of viral RNA from the nucleus to the cytoplasm. In terms of processing, phosphorylated by protein kinase CK2. Presence of, and maybe binding to the N-terminus of the regulatory beta subunit of CK2 is necessary for CK2-mediated Rev's phosphorylation.

The protein localises to the host nucleus. It is found in the host nucleolus. The protein resides in the host cytoplasm. Functionally, escorts unspliced or incompletely spliced viral pre-mRNAs (late transcripts) out of the nucleus of infected cells. These pre-mRNAs carry a recognition sequence called Rev responsive element (RRE) located in the env gene, that is not present in fully spliced viral mRNAs (early transcripts). This function is essential since most viral proteins are translated from unspliced or partially spliced pre-mRNAs which cannot exit the nucleus by the pathway used by fully processed cellular mRNAs. Rev itself is translated from a fully spliced mRNA that readily exits the nucleus. Rev's nuclear localization signal (NLS) binds directly to KPNB1/Importin beta-1 without previous binding to KPNA1/Importin alpha-1. KPNB1 binds to the GDP bound form of RAN (Ran-GDP) and targets Rev to the nucleus. In the nucleus, the conversion from Ran-GDP to Ran-GTP dissociates Rev from KPNB1 and allows Rev's binding to the RRE in viral pre-mRNAs. Rev multimerization on the RRE via cooperative assembly exposes its nuclear export signal (NES) to the surface. Rev can then form a complex with XPO1/CRM1 and Ran-GTP, leading to nuclear export of the complex. Conversion from Ran-GTP to Ran-GDP mediates dissociation of the Rev/RRE/XPO1/RAN complex, so that Rev can return to the nucleus for a subsequent round of export. Beside KPNB1, also seems to interact with TNPO1/Transportin-1, RANBP5/IPO5 and IPO7/RANBP7 for nuclear import. The nucleoporin-like HRB/RIP is an essential cofactor that probably indirectly interacts with Rev to release HIV RNAs from the perinuclear region to the cytoplasm. The polypeptide is Protein Rev (Human immunodeficiency virus type 1 group M subtype F2 (isolate MP257) (HIV-1)).